A 148-amino-acid chain; its full sequence is UPF0178 protein EF_0842 (148 aa).

It belongs to the UPF0178 family.

The protein is UPF0178 protein EF_0842 of Enterococcus faecalis (strain ATCC 700802 / V583).